The chain runs to 147 residues: Hemoglobin subunit delta (147 aa).

The region spanning 3-147 (HLTADETALV…VANALAHKYH (145 aa)) is the Globin domain. Position 51 is a phosphoserine (serine 51). Heme b is bound by residues histidine 64 and histidine 93.

The protein belongs to the globin family. In terms of assembly, heterotetramer of two delta chains and two alpha chains. As to expression, red blood cells.

The sequence is that of Hemoglobin subunit delta (HBD) from Dugong dugon (Dugong).